The sequence spans 418 residues: Histidinol dehydrogenase (418 aa).

Positions 119, 180, and 203 each coordinate NAD(+). Residues threonine 226, glutamine 248, and histidine 251 each coordinate substrate. Zn(2+)-binding residues include glutamine 248 and histidine 251. Catalysis depends on proton acceptor residues glutamate 316 and histidine 317. Substrate is bound by residues histidine 317, aspartate 350, glutamate 404, and histidine 409. Aspartate 350 lines the Zn(2+) pocket. Histidine 409 is a Zn(2+) binding site.

The protein belongs to the histidinol dehydrogenase family. The cofactor is Zn(2+).

It catalyses the reaction L-histidinol + 2 NAD(+) + H2O = L-histidine + 2 NADH + 3 H(+). The protein operates within amino-acid biosynthesis; L-histidine biosynthesis; L-histidine from 5-phospho-alpha-D-ribose 1-diphosphate: step 9/9. In terms of biological role, catalyzes the sequential NAD-dependent oxidations of L-histidinol to L-histidinaldehyde and then to L-histidine. The chain is Histidinol dehydrogenase from Staphylococcus aureus (strain MRSA252).